The primary structure comprises 151 residues: Protein E6 (151 aa).

2 zinc fingers span residues 30 to 66 (CVYC…CKKC) and 103 to 139 (CHRC…CTNC). Residues 149–151 (TQV) carry the PDZ-binding domain motif.

It belongs to the papillomaviridae E6 protein family. Forms homodimers. Interacts with ubiquitin-protein ligase UBE3A/E6-AP and thus forms a complex with human TP53. Interacts with human NFX1 and MAGI3. Interacts with human IRF3; this interaction inhibits the establishment of antiviral state. Interacts with human TYK2; this interaction inhibits JAK-STAT activation by interferon alpha. Interacts with host DLG1; this interaction leads to the proteasomal degradation of DLG1.

Its subcellular location is the host cytoplasm. The protein localises to the host nucleus. Functionally, plays a major role in the induction and maintenance of cellular transformation. Acts mainly as an oncoprotein by stimulating the destruction of many host cell key regulatory proteins. E6 associates with host UBE3A/E6-AP ubiquitin-protein ligase, and inactivates tumor suppressors TP53 and TP73 by targeting them to the 26S proteasome for degradation. In turn, DNA damage and chromosomal instabilities increase and lead to cell proliferation and cancer development. The complex E6/E6AP targets several other substrates to degradation via the proteasome including host DLG1 or NFX1, a repressor of human telomerase reverse transcriptase (hTERT). The resulting increased expression of hTERT prevents the shortening of telomere length leading to cell immortalization. Other cellular targets including BAK1, Fas-associated death domain-containing protein (FADD) and procaspase 8, are degraded by E6/E6AP causing inhibition of apoptosis. E6 also inhibits immune response by interacting with host IRF3 and TYK2. These interactions prevent IRF3 transcriptional activities and inhibit TYK2-mediated JAK-STAT activation by interferon alpha resulting in inhibition of the interferon signaling pathway. The chain is Protein E6 from Homo sapiens (Human).